Here is a 42-residue protein sequence, read N- to C-terminus: Lanthionine-containing peptide SapB precursor RamS (42 aa).

Residues 1-21 (MNLFDLQSMETPKEEAMGDVE) constitute a propeptide that is removed on maturation. The interval 1-21 (MNLFDLQSMETPKEEAMGDVE) is disordered. 2 cross-links (lanthionine (Ser-Cys)) span residues 24–31 (SRASLLLC) and 34–41 (SSLSITTC). 2 positions are modified to 2,3-didehydroalanine (Ser): Ser27 and Ser37.

The protein belongs to the lanthionine-containing morphogen family. In terms of processing, maturation involves the enzymatic conversion of Ser into dehydrated AA and the formation of thioether bonds with cysteine, probably by RamC. This is followed by membrane translocation and cleavage of the modified precursor. The RamS precursor protein (detected by an anti-propeptide antibody and by a C-terminal His-tag) is detected from at least 16 hours post-germination; its apparent molecular weight decreases starting from about 34 hours, when its probable modifying enzyme ramC is transcribed. Surfactin, a B.subtilis cyclic lipopeptide antibiotic which prevents aerial hyphae formation in S.coelicolor, decreases localization of RamS precursor protein to the cell membrane, suggesting that processing only occurs at the cell membrane.

It is found in the cell membrane. Its subcellular location is the secreted. The protein localises to the spore wall. Functionally, stably accumulated precursor of SapB. Its function is as follows. Lanthionine-containing peptide devoid of antibiotic properties. A surface active peptide involved in the efficient formation of aerial mycelium when cells are grown in rich media. Has an overlapping function with the surface-active chaplin proteins; chaplins are essential on minimal medium while on rich medium both chaplins and SapB are required for efficient aerial hyphae formation. Required under conditions of high osmolarity where it may change the physical properties of the chaplin layer to allow hyphae to grow into air. Suggested to self-assemble at air-water interfaces, thus providing a film of surfactant through which nascent aerial hyphae can emerge; the aerial hyphae differentiate further into spores. Application to bald mutants (bld, unable to make aerial hyphae) restores hyphae growth. Application to chaplin negative mutants as well as ramC-ramS-ramA-ramB and ramR deletions also restores aerial hyphae growth and sporulation. Reduces surface tension of water from 72 to 30 mJ/m(2). This Streptomyces coelicolor (strain ATCC BAA-471 / A3(2) / M145) protein is Lanthionine-containing peptide SapB precursor RamS (ramS).